The primary structure comprises 152 residues: MTAMLDSFATDLTAATSLHQPGNLPHPPHAIDAENVPLSGGTDPTYGEVRWRTLINGTEAAPRDMVLGIAEFGPGHQLRPHRHTPPEFYLGLEGSGIVTIDGVPHEIRAGVALYIPGDAEHGTVAGPEGLRFAYGFASASFEAIEYRFTASA.

In terms of domain architecture, Cupin type-2 spans 69–124 (IAEFGPGHQLRPHRHTPPEFYLGLEGSGIVTIDGVPHEIRAGVALYIPGDAEHGTV). Fe cation-binding residues include H83, E87, Y89, and H121.

Belongs to the non-heme iron-dependent dioxygenase family. Homodimer. It depends on Fe(2+) as a cofactor.

It catalyses the reaction S,S-dimethyl-beta-propiothetin = acrylate + dimethyl sulfide + H(+). Able to cleave dimethylsulfoniopropionate (DMSP), releasing dimethyl sulfide (DMS) and acrylate. DMS is the principal form by which sulfur is transported from oceans to the atmosphere. The polypeptide is Dimethylsulfoniopropionate lyase DddW (Ruegeria pomeroyi (strain ATCC 700808 / DSM 15171 / DSS-3) (Silicibacter pomeroyi)).